The following is a 621-amino-acid chain: Chaperone protein HtpG (621 aa).

The interval 1–328 (MKQEKKKFDA…SEDLPLNISR (328 aa)) is a; substrate-binding. Positions 329–544 (ESLQHNNVLE…EAAMDIRMER (216 aa)) are b. The segment at 478–498 (DVDQATSSSEEKNKDDKKSDD) is disordered. Basic and acidic residues predominate over residues 486-498 (SEEKNKDDKKSDD). Residues 545 to 621 (FLIEQKQIAN…LNDIVQKAIL (77 aa)) are c.

Belongs to the heat shock protein 90 family. Homodimer.

The protein resides in the cytoplasm. Molecular chaperone. Has ATPase activity. In Rickettsia bellii (strain RML369-C), this protein is Chaperone protein HtpG.